Consider the following 122-residue polypeptide: Large ribosomal subunit protein uL14 (122 aa).

Belongs to the universal ribosomal protein uL14 family. Part of the 50S ribosomal subunit. Forms a cluster with proteins L3 and L19. In the 70S ribosome, L14 and L19 interact and together make contacts with the 16S rRNA in bridges B5 and B8.

In terms of biological role, binds to 23S rRNA. Forms part of two intersubunit bridges in the 70S ribosome. The protein is Large ribosomal subunit protein uL14 of Leptothrix cholodnii (strain ATCC 51168 / LMG 8142 / SP-6) (Leptothrix discophora (strain SP-6)).